A 273-amino-acid polypeptide reads, in one-letter code: Anthranilate synthase beta subunit 2, chloroplastic (273 aa).

A chloroplast-targeting transit peptide spans M1 to R36. Positions P71–E270 constitute a Glutamine amidotransferase type-1 domain. The active-site Nucleophile is C149. Catalysis depends on residues H244 and E246.

In terms of assembly, heterotetramer consisting of two non-identical subunits: a beta subunit and a large alpha subunit.

Its subcellular location is the plastid. It is found in the chloroplast. It carries out the reaction chorismate + L-glutamine = anthranilate + pyruvate + L-glutamate + H(+). It functions in the pathway amino-acid biosynthesis; L-tryptophan biosynthesis; L-tryptophan from chorismate: step 1/5. Feedback inhibition by tryptophan. Functionally, part of a heterotetrameric complex that catalyzes the two-step biosynthesis of anthranilate, an intermediate in the biosynthesis of L-tryptophan. In the first step, the glutamine-binding beta subunit of anthranilate synthase (AS) provides the glutamine amidotransferase activity which generates ammonia as a substrate that, along with chorismate, is used in the second step, catalyzed by the large alpha subunit of AS to produce anthranilate. The chain is Anthranilate synthase beta subunit 2, chloroplastic (ASB2) from Arabidopsis thaliana (Mouse-ear cress).